The chain runs to 181 residues: Oligoribonuclease (181 aa).

One can recognise an Exonuclease domain in the interval 8–171 (LIWVDLEMTG…EDIKESIAEM (164 aa)). The active site involves Tyr-129.

This sequence belongs to the oligoribonuclease family.

It is found in the cytoplasm. 3'-to-5' exoribonuclease specific for small oligoribonucleotides. This is Oligoribonuclease from Shewanella frigidimarina (strain NCIMB 400).